A 258-amino-acid polypeptide reads, in one-letter code: UPF0246 protein VV1_0535 (258 aa).

It belongs to the UPF0246 family.

The sequence is that of UPF0246 protein VV1_0535 from Vibrio vulnificus (strain CMCP6).